The chain runs to 176 residues: Ribosome maturation factor RimM (176 aa).

The 74-residue stretch at Pro100–Leu173 folds into the PRC barrel domain.

It belongs to the RimM family. In terms of assembly, binds ribosomal protein uS19.

It is found in the cytoplasm. An accessory protein needed during the final step in the assembly of 30S ribosomal subunit, possibly for assembly of the head region. Essential for efficient processing of 16S rRNA. May be needed both before and after RbfA during the maturation of 16S rRNA. It has affinity for free ribosomal 30S subunits but not for 70S ribosomes. The polypeptide is Ribosome maturation factor RimM (Acidothermus cellulolyticus (strain ATCC 43068 / DSM 8971 / 11B)).